The primary structure comprises 300 residues: Haloalkane dehalogenase (300 aa).

In terms of domain architecture, AB hydrolase-1 spans 32–155; sequence AIVFQHGNPT…PAVRGVFQGF (124 aa). Asp109 serves as the catalytic Nucleophile. Glu133 serves as the catalytic Proton donor. His273 (proton acceptor) is an active-site residue.

The protein belongs to the haloalkane dehalogenase family. Type 2 subfamily. Monomer.

The enzyme catalyses 1-haloalkane + H2O = a halide anion + a primary alcohol + H(+). Its function is as follows. Catalyzes hydrolytic cleavage of carbon-halogen bonds in halogenated aliphatic compounds, leading to the formation of the corresponding primary alcohols, halide ions and protons. The polypeptide is Haloalkane dehalogenase (Mycobacterium bovis (strain BCG / Pasteur 1173P2)).